Here is a 231-residue protein sequence, read N- to C-terminus: Small ribosomal subunit protein uS3 (231 aa).

One can recognise a KH type-2 domain in the interval 39-107; it reads IRKFLKAKLY…DVTINIKEER (69 aa).

The protein belongs to the universal ribosomal protein uS3 family. In terms of assembly, part of the 30S ribosomal subunit. Forms a tight complex with proteins S10 and S14.

Binds the lower part of the 30S subunit head. Binds mRNA in the 70S ribosome, positioning it for translation. This chain is Small ribosomal subunit protein uS3, found in Campylobacter hominis (strain ATCC BAA-381 / DSM 21671 / CCUG 45161 / LMG 19568 / NCTC 13146 / CH001A).